The sequence spans 370 residues: tRNA/tmRNA (uracil-C(5))-methyltransferase (370 aa).

Positions 195, 221, 226, 242, and 302 each coordinate S-adenosyl-L-methionine. Cys-327 acts as the Nucleophile in catalysis. Residue Glu-361 is the Proton acceptor of the active site.

The protein belongs to the class I-like SAM-binding methyltransferase superfamily. RNA M5U methyltransferase family. TrmA subfamily.

It catalyses the reaction uridine(54) in tRNA + S-adenosyl-L-methionine = 5-methyluridine(54) in tRNA + S-adenosyl-L-homocysteine + H(+). The enzyme catalyses uridine(341) in tmRNA + S-adenosyl-L-methionine = 5-methyluridine(341) in tmRNA + S-adenosyl-L-homocysteine + H(+). Functionally, dual-specificity methyltransferase that catalyzes the formation of 5-methyluridine at position 54 (m5U54) in all tRNAs, and that of position 341 (m5U341) in tmRNA (transfer-mRNA). The protein is tRNA/tmRNA (uracil-C(5))-methyltransferase of Wolinella succinogenes (strain ATCC 29543 / DSM 1740 / CCUG 13145 / JCM 31913 / LMG 7466 / NCTC 11488 / FDC 602W) (Vibrio succinogenes).